A 403-amino-acid polypeptide reads, in one-letter code: F-box/LRR-repeat protein At1g06630 (403 aa).

The region spanning 11–59 (RDAINWLPDEILGKILSLLATKQAVSTSVLSKKWRTLFKLVDTLEFDDS) is the F-box domain. LRR repeat units follow at residues 239–262 (LPNLEYLDYSDYALYGYPQVNLES) and 288–312 (IRNVEILSLSPDSVGVIYSCCKYGL).

This Arabidopsis thaliana (Mouse-ear cress) protein is F-box/LRR-repeat protein At1g06630.